The primary structure comprises 373 residues: Lipoyl synthase (373 aa).

Residues 12-36 form a disordered region; the sequence is HVVSNDHPSSSPLQPGVKQSGEDKI. Positions 81, 86, 92, 107, 111, 114, and 323 each coordinate [4Fe-4S] cluster. In terms of domain architecture, Radical SAM core spans 93-312; the sequence is FSHGTATFMI…EEYGMALGFS (220 aa). A disordered region spans residues 346–373; sequence PAVSSTEHRERHTIASKSASKTESIRHR.

The protein belongs to the radical SAM superfamily. Lipoyl synthase family. Requires [4Fe-4S] cluster as cofactor.

The protein resides in the cytoplasm. It carries out the reaction [[Fe-S] cluster scaffold protein carrying a second [4Fe-4S](2+) cluster] + N(6)-octanoyl-L-lysyl-[protein] + 2 oxidized [2Fe-2S]-[ferredoxin] + 2 S-adenosyl-L-methionine + 4 H(+) = [[Fe-S] cluster scaffold protein] + N(6)-[(R)-dihydrolipoyl]-L-lysyl-[protein] + 4 Fe(3+) + 2 hydrogen sulfide + 2 5'-deoxyadenosine + 2 L-methionine + 2 reduced [2Fe-2S]-[ferredoxin]. Its pathway is protein modification; protein lipoylation via endogenous pathway; protein N(6)-(lipoyl)lysine from octanoyl-[acyl-carrier-protein]: step 2/2. Its function is as follows. Catalyzes the radical-mediated insertion of two sulfur atoms into the C-6 and C-8 positions of the octanoyl moiety bound to the lipoyl domains of lipoate-dependent enzymes, thereby converting the octanoylated domains into lipoylated derivatives. The protein is Lipoyl synthase of Xylella fastidiosa (strain 9a5c).